The primary structure comprises 207 residues: LexA repressor (207 aa).

Positions 29 to 49 (VREICSAVDLSSTSTVHGHLA) form a DNA-binding region, H-T-H motif. Residues Ser128 and Lys166 each act as for autocatalytic cleavage activity in the active site.

It belongs to the peptidase S24 family. In terms of assembly, homodimer.

It carries out the reaction Hydrolysis of Ala-|-Gly bond in repressor LexA.. Functionally, represses a number of genes involved in the response to DNA damage (SOS response), including recA and lexA. In the presence of single-stranded DNA, RecA interacts with LexA causing an autocatalytic cleavage which disrupts the DNA-binding part of LexA, leading to derepression of the SOS regulon and eventually DNA repair. This chain is LexA repressor, found in Lactobacillus gasseri (strain ATCC 33323 / DSM 20243 / BCRC 14619 / CIP 102991 / JCM 1131 / KCTC 3163 / NCIMB 11718 / NCTC 13722 / AM63).